The chain runs to 370 residues: MRVFTTGQLLGTVVAVQANFYKVQLDQEVREQGSRGAGEEVHLDSPLPLCPLSLLLCTRRTRLKKIGQQVMVGDRVVVEEPDWAGGRGAIADVLSRQTQLDRPPIANADQILLVFAVADPPLEPYQLSRFLVKAETTGLDVVLCLNKSDLVSPEIQQQISDRLLAWGYQPLFISVENQINIDQIAKYLSNKITVVAGPSGVGKSSLINALIPNINLRVGEVSGKLARGRHTTRHVELFELPNGGLLADTPGFNQPDVDCSPEELVHYFPEARERLAIASCRFNDCSHRDEPDCAVRGDWERYEHYLEFLADAIARQTQLYQQADPESTLKLKTKGKGQSQYEPKLESKKYRRTSRRTQVQGLQDLYQEEE.

One can recognise a CP-type G domain in the interval 97-255 (QTQLDRPPIA…LADTPGFNQP (159 aa)). GTP contacts are provided by residues 146 to 149 (NKSD) and 197 to 205 (GPSGVGKSS). Residues C280, C285, H287, and C293 each contribute to the Zn(2+) site. The tract at residues 325-370 (PESTLKLKTKGKGQSQYEPKLESKKYRRTSRRTQVQGLQDLYQEEE) is disordered.

It belongs to the TRAFAC class YlqF/YawG GTPase family. RsgA subfamily. In terms of assembly, monomer. Associates with 30S ribosomal subunit, binds 16S rRNA. Requires Zn(2+) as cofactor.

The protein resides in the cytoplasm. Functionally, one of several proteins that assist in the late maturation steps of the functional core of the 30S ribosomal subunit. Helps release RbfA from mature subunits. May play a role in the assembly of ribosomal proteins into the subunit. Circularly permuted GTPase that catalyzes slow GTP hydrolysis, GTPase activity is stimulated by the 30S ribosomal subunit. In Nostoc sp. (strain PCC 7120 / SAG 25.82 / UTEX 2576), this protein is Small ribosomal subunit biogenesis GTPase RsgA 1.